A 222-amino-acid polypeptide reads, in one-letter code: Phosphoribosylformylglycinamidine synthase subunit PurQ (222 aa).

The 220-residue stretch at 3 to 222 (SAVVLLPGLN…LFEGALGIAA (220 aa)) folds into the Glutamine amidotransferase type-1 domain. Catalysis depends on C86, which acts as the Nucleophile. Residues H196 and E198 contribute to the active site.

Part of the FGAM synthase complex composed of 1 PurL, 1 PurQ and 2 PurS subunits.

It localises to the cytoplasm. The enzyme catalyses N(2)-formyl-N(1)-(5-phospho-beta-D-ribosyl)glycinamide + L-glutamine + ATP + H2O = 2-formamido-N(1)-(5-O-phospho-beta-D-ribosyl)acetamidine + L-glutamate + ADP + phosphate + H(+). It carries out the reaction L-glutamine + H2O = L-glutamate + NH4(+). It participates in purine metabolism; IMP biosynthesis via de novo pathway; 5-amino-1-(5-phospho-D-ribosyl)imidazole from N(2)-formyl-N(1)-(5-phospho-D-ribosyl)glycinamide: step 1/2. Part of the phosphoribosylformylglycinamidine synthase complex involved in the purines biosynthetic pathway. Catalyzes the ATP-dependent conversion of formylglycinamide ribonucleotide (FGAR) and glutamine to yield formylglycinamidine ribonucleotide (FGAM) and glutamate. The FGAM synthase complex is composed of three subunits. PurQ produces an ammonia molecule by converting glutamine to glutamate. PurL transfers the ammonia molecule to FGAR to form FGAM in an ATP-dependent manner. PurS interacts with PurQ and PurL and is thought to assist in the transfer of the ammonia molecule from PurQ to PurL. This chain is Phosphoribosylformylglycinamidine synthase subunit PurQ, found in Mesorhizobium japonicum (strain LMG 29417 / CECT 9101 / MAFF 303099) (Mesorhizobium loti (strain MAFF 303099)).